A 492-amino-acid chain; its full sequence is Ferruginol synthase (492 aa).

The helical transmembrane segment at 1–21 (MDPFPLVAAALFIAATWFITF) threads the bilayer. Cys436 lines the heme pocket.

Belongs to the cytochrome P450 family. Heme is required as a cofactor. Expressed in leaf glandular trichomes.

Its subcellular location is the membrane. It catalyses the reaction abieta-8,11,13-triene + reduced [NADPH--hemoprotein reductase] + O2 = ferruginol + oxidized [NADPH--hemoprotein reductase] + H2O + H(+). The catalysed reaction is ferruginol + reduced [NADPH--hemoprotein reductase] + O2 = 11-hydroxyferruginol + oxidized [NADPH--hemoprotein reductase] + H2O + H(+). It carries out the reaction miltiradiene + 2 reduced [NADPH--hemoprotein reductase] + 2 O2 = 11-oxomiltiradiene + 2 oxidized [NADPH--hemoprotein reductase] + 3 H2O + 2 H(+). It participates in secondary metabolite biosynthesis; terpenoid biosynthesis. Functionally, monooxygenase involved in the biosynthesis of labdane-related diterpenes natural products. Catalyzes the oxidation of abietatriene to produce ferruginol. Catalyzes the oxidation of ferruginol at C-12 to produce 11-hydroxyferruginol. Ferruginol and 11-hydroxyferruginol are intermediates in the biosynthesis of carnosate, a potent antioxidant. May also convert miltiradiene into 11-oxomiltiradiene. This is Ferruginol synthase from Salvia fruticosa (Greek sage).